A 372-amino-acid polypeptide reads, in one-letter code: Cytoplasmic tRNA 2-thiolation protein 1 (372 aa).

Positions 335-372 are disordered; it reads GKKEDGGCGSGGGGCGCAGAADETENEETRKRLKDLQF. Gly residues predominate over residues 341–351; it reads GCGSGGGGCGC. The segment covering 361 to 372 has biased composition (basic and acidic residues); it reads EETRKRLKDLQF.

The protein belongs to the TtcA family. CTU1/NCS6/ATPBD3 subfamily.

The protein resides in the cytoplasm. It functions in the pathway tRNA modification; 5-methoxycarbonylmethyl-2-thiouridine-tRNA biosynthesis. In terms of biological role, plays a central role in 2-thiolation of mcm(5)S(2)U at tRNA wobble positions of tRNA(Lys), tRNA(Glu) and tRNA(Gln). Directly binds tRNAs and probably acts by catalyzing adenylation of tRNAs, an intermediate required for 2-thiolation. It is unclear whether it acts as a sulfurtransferase that transfers sulfur from thiocarboxylated URM1 onto the uridine of tRNAs at wobble position. This is Cytoplasmic tRNA 2-thiolation protein 1 from Caenorhabditis briggsae.